The following is a 217-amino-acid chain: Large ribosomal subunit protein uL4 (217 aa).

The disordered stretch occupies residues 46 to 102 (KRQGTHSAKTRAEVSGGGRKPFRQKGTGRARQGSIRAPHFTGGGISHGPKPRDYSQR).

This sequence belongs to the universal ribosomal protein uL4 family. In terms of assembly, part of the 50S ribosomal subunit.

Its function is as follows. One of the primary rRNA binding proteins, this protein initially binds near the 5'-end of the 23S rRNA. It is important during the early stages of 50S assembly. It makes multiple contacts with different domains of the 23S rRNA in the assembled 50S subunit and ribosome. In terms of biological role, forms part of the polypeptide exit tunnel. The sequence is that of Large ribosomal subunit protein uL4 from Corynebacterium diphtheriae (strain ATCC 700971 / NCTC 13129 / Biotype gravis).